The sequence spans 385 residues: GDSL esterase/lipase 5 (385 aa).

The first 35 residues, 1–35, serve as a signal peptide directing secretion; that stretch reads MRESTLMEKVTRRTISSFIFFIVSSTILFLAGKSS. N45 carries N-linked (GlcNAc...) asparagine glycosylation. Residue S55 is the Nucleophile of the active site. N-linked (GlcNAc...) asparagine glycosylation is found at N66, N194, N211, and N289. Residues D345 and H348 contribute to the active site.

It belongs to the 'GDSL' lipolytic enzyme family.

Its subcellular location is the secreted. This is GDSL esterase/lipase 5 (GLIP5) from Arabidopsis thaliana (Mouse-ear cress).